A 65-amino-acid polypeptide reads, in one-letter code: Large ribosomal subunit protein bL35 (65 aa).

The protein belongs to the bacterial ribosomal protein bL35 family.

The protein is Large ribosomal subunit protein bL35 of Yersinia enterocolitica serotype O:8 / biotype 1B (strain NCTC 13174 / 8081).